The primary structure comprises 270 residues: Putative pyruvate, phosphate dikinase regulatory protein (270 aa).

Residue 151 to 158 coordinates ADP; that stretch reads GVSRTSKT.

The protein belongs to the pyruvate, phosphate/water dikinase regulatory protein family. PDRP subfamily.

The enzyme catalyses N(tele)-phospho-L-histidyl/L-threonyl-[pyruvate, phosphate dikinase] + ADP = N(tele)-phospho-L-histidyl/O-phospho-L-threonyl-[pyruvate, phosphate dikinase] + AMP + H(+). It catalyses the reaction N(tele)-phospho-L-histidyl/O-phospho-L-threonyl-[pyruvate, phosphate dikinase] + phosphate + H(+) = N(tele)-phospho-L-histidyl/L-threonyl-[pyruvate, phosphate dikinase] + diphosphate. In terms of biological role, bifunctional serine/threonine kinase and phosphorylase involved in the regulation of the pyruvate, phosphate dikinase (PPDK) by catalyzing its phosphorylation/dephosphorylation. This Ligilactobacillus salivarius (strain UCC118) (Lactobacillus salivarius) protein is Putative pyruvate, phosphate dikinase regulatory protein.